The primary structure comprises 108 residues: Peptidyl-prolyl cis-trans isomerase FKBP1B (108 aa).

Positions 20 to 108 (GQTCVVHYTG…IFGVELLNLE (89 aa)) constitute a PPIase FKBP-type domain.

This sequence belongs to the FKBP-type PPIase family. FKBP1 subfamily. Identified in a complex composed of RYR2, FKBP1B, PKA catalytic subunit, PRKAR2A, AKAP6, and the protein phosphatases PP2A and PP1. Interacts directly with RYR2.

Its subcellular location is the cytoplasm. It is found in the sarcoplasmic reticulum. The enzyme catalyses [protein]-peptidylproline (omega=180) = [protein]-peptidylproline (omega=0). With respect to regulation, inhibited by both FK506 and rapamycin. Functionally, has the potential to contribute to the immunosuppressive and toxic effects of FK506 and rapamycin. PPIases accelerate the folding of proteins. It catalyzes the cis-trans isomerization of proline imidic peptide bonds in oligopeptides. The chain is Peptidyl-prolyl cis-trans isomerase FKBP1B (FKBP1B) from Oryctolagus cuniculus (Rabbit).